Here is a 204-residue protein sequence, read N- to C-terminus: Histone chaperone ASF1A (204 aa).

The tract at residues 1-156 (MAKVQVNNVV…TRFHINWEDN (156 aa)) is interaction with histone H3, CHAF1B, and HIRA. A Required for interaction with HIRA motif is present at residues 31 to 37 (IEDLSED). Residues 155–204 (DNTEKLEDAESSNPNLQSLLSTDALPSASKGWSTSENSLNVMLESHMDCM) form a required for interaction with HIRA region. S192 carries the post-translational modification Phosphoserine.

Belongs to the ASF1 family. In terms of assembly, interacts with histone H3 (via C-terminus), including histone H3.1, H3.2 and H3.3, and histone H4; the interaction with H3 is direct. Probably interacts with the heterodimeric form of H3-H4 taking the place of the second dimer. Interacts with the CHAF1A, CHAF1B and RBBP4 subunits of the CAF-1 complex. Interacts with CABIN1, HAT1, HIRA, NASP, TAF1 and UBN1. Found in a soluble complex with NASP and histones H3 and H4; the interaction with NASP is probably indirect and mediated by H3-H4. Interacts with CDAN1. Found in a cytosolic complex with IPO4 and histones H3 and H4. Interacts with CREBBP. Post-translationally, phosphorylated by TLK1 and TLK2. Highly phosphorylated in S-phase and at lower levels in M-phase. TLK2-mediated phosphorylation at Ser-192 prevents proteasome-dependent degradation. Phosphorylation at Ser-192 by PRKDC in response to DNA damage promotes the histone chaperone activity and ability to replace histones at double-strand breaks (DSBs) at stalled or collapsed replication forks, leading to RAD51 recruitment.

The protein localises to the nucleus. The protein resides in the chromosome. Its function is as follows. Histone chaperone that facilitates histone deposition and histone exchange and removal during nucleosome assembly and disassembly. Cooperates with chromatin assembly factor 1 (CAF-1) to promote replication-dependent chromatin assembly and with HIRA to promote replication-independent chromatin assembly. Promotes homologous recombination-mediated repair of double-strand breaks (DSBs) at stalled or collapsed replication forks: acts by mediating histone replacement at DSBs, leading to recruitment of the MMS22L-TONSL complex and subsequent loading of RAD51. Also involved in the nuclear import of the histone H3-H4 dimer together with importin-4 (IPO4): specifically recognizes and binds newly synthesized histones with the monomethylation of H3 'Lys-9' and acetylation at 'Lys-14' (H3K9me1K14ac) marks, and diacetylation at 'Lys-5' and 'Lys-12' of H4 (H4K5K12ac) marks in the cytosol. Required for the formation of senescence-associated heterochromatin foci (SAHF) and efficient senescence-associated cell cycle exit. In Mus musculus (Mouse), this protein is Histone chaperone ASF1A.